The chain runs to 380 residues: Ceramide-binding protein svf1 (380 aa).

The peripherally associates with membranes stretch occupies residues 1–18; sequence MKAWLQSSISYYTGTAEP.

The protein belongs to the SVF1 family.

The protein resides in the golgi apparatus. It is found in the cis-Golgi network membrane. It localises to the endoplasmic reticulum membrane. Its subcellular location is the cytoplasm. The protein localises to the nucleus. Its function is as follows. Ceramide-binding protein that may transfer ceramides from the endoplasmic reticulum membrane to the cis-Golgi network membrane, and is thereby required for the biosynthesis of complex sphingolipids. The protein is Ceramide-binding protein svf1 of Schizosaccharomyces pombe (strain 972 / ATCC 24843) (Fission yeast).